Reading from the N-terminus, the 518-residue chain is 3-phosphoshikimate 1-carboxyvinyltransferase 1, chloroplastic (518 aa).

The N-terminal 74 residues, 1–74 (MAQISSMGQG…RISASVVTAQ (74 aa)), are a transit peptide targeting the chloroplast. 3-phosphoshikimate contacts are provided by Lys97, Ser98, and Arg102. Phosphoenolpyruvate is bound at residue Lys97. Positions 175 and 205 each coordinate phosphoenolpyruvate. 3-phosphoshikimate contacts are provided by Ser252, Ser253, Gln254, Ser280, Asp405, and Lys432. Gln254 is a binding site for phosphoenolpyruvate. Asp405 serves as the catalytic Proton acceptor. Phosphoenolpyruvate contacts are provided by Arg436, Arg478, and Lys503.

Belongs to the EPSP synthase family.

It is found in the plastid. The protein resides in the chloroplast. The enzyme catalyses 3-phosphoshikimate + phosphoenolpyruvate = 5-O-(1-carboxyvinyl)-3-phosphoshikimate + phosphate. It functions in the pathway metabolic intermediate biosynthesis; chorismate biosynthesis; chorismate from D-erythrose 4-phosphate and phosphoenolpyruvate: step 6/7. Its function is as follows. Catalyzes the transfer of the enolpyruvyl moiety of phosphoenolpyruvate (PEP) to the 5-hydroxyl of shikimate-3-phosphate (S3P) to produce enolpyruvyl shikimate-3-phosphate and inorganic phosphate. The polypeptide is 3-phosphoshikimate 1-carboxyvinyltransferase 1, chloroplastic (EPSPS-1) (Nicotiana tabacum (Common tobacco)).